The primary structure comprises 321 residues: Probable arabinan endo-1,5-alpha-L-arabinosidase A (321 aa).

Residues 1-19 form the signal peptide; the sequence is MYRLLSVASVPLLASLVHG. Asp-34 serves as the catalytic Proton acceptor. Glu-200 functions as the Proton donor in the catalytic mechanism. Asn-295 is a glycosylation site (N-linked (GlcNAc...) asparagine).

This sequence belongs to the glycosyl hydrolase 43 family.

It is found in the secreted. The catalysed reaction is Endohydrolysis of (1-&gt;5)-alpha-arabinofuranosidic linkages in (1-&gt;5)-arabinans.. Its pathway is glycan metabolism; L-arabinan degradation. Endo-1,5-alpha-L-arabinanase involved in degradation of pectin. Its preferred substrate is linear 1,5-alpha-L-arabinan. This chain is Probable arabinan endo-1,5-alpha-L-arabinosidase A (abnA), found in Aspergillus niger (strain ATCC MYA-4892 / CBS 513.88 / FGSC A1513).